Reading from the N-terminus, the 430-residue chain is CinA-like protein (430 aa).

Belongs to the CinA family.

This chain is CinA-like protein, found in Prochlorococcus marinus (strain NATL2A).